Consider the following 520-residue polypeptide: Cyclin-L2 (520 aa).

Cyclin-like stretches follow at residues E81 to K183 and K196 to Q280. A disordered region spans residues R309–R520. A phosphoserine mark is found at S330, S337, S347, and S350. Basic and acidic residues predominate over residues R356 to G366. S368 bears the Phosphoserine mark. The RS stretch occupies residues R384–S422. The span at S407–R429 shows a compositional bias: low complexity. Residues S440–H453 are compositionally biased toward basic and acidic residues. Positions L454 to S471 are enriched in basic residues. Basic and acidic residues-rich tracts occupy residues R472–G481 and Y489–G514.

Belongs to the cyclin family. Cyclin L subfamily. In terms of assembly, interacts with CDK11A, CDK11B, CDK12, CDK13 and POLR2A, the hyperphosphorylated C-terminal domain (CTD) of RNA polymerase II. May form a ternary complex with CDK11B and casein kinase II (CKII). Interacts with pre-mRNA-splicing factors, including at least SRSF1, SRSF2 and SRSF7/SLU7.

It localises to the nucleus speckle. Its subcellular location is the nucleus. The protein localises to the nucleoplasm. In terms of biological role, involved in pre-mRNA splicing. May induce cell death, possibly by acting on the transcription and RNA processing of apoptosis-related factors. The chain is Cyclin-L2 (Ccnl2) from Rattus norvegicus (Rat).